We begin with the raw amino-acid sequence, 177 residues long: Basic form of pathogenesis-related protein 1 (177 aa).

The N-terminal stretch at 1 to 23 is a signal peptide; that stretch reads MGFLTTIVACFITFAILIHSSKA. Residue Gln24 is modified to Pyrrolidone carboxylic acid. The 117-residue stretch at 31 to 147 folds into the SCP domain; the sequence is LNPHNAARRQ…NGWFFITCNY (117 aa).

It belongs to the CRISP family. In terms of processing, two disulfide bonds are present.

Functionally, probably involved in the defense reaction of plants against pathogens. This Nicotiana tabacum (Common tobacco) protein is Basic form of pathogenesis-related protein 1.